Consider the following 448-residue polypeptide: Probable glycine dehydrogenase (decarboxylating) subunit 1 (448 aa).

The protein belongs to the GcvP family. N-terminal subunit subfamily. The glycine cleavage system is composed of four proteins: P, T, L and H. In this organism, the P 'protein' is a heterodimer of two subunits.

It catalyses the reaction N(6)-[(R)-lipoyl]-L-lysyl-[glycine-cleavage complex H protein] + glycine + H(+) = N(6)-[(R)-S(8)-aminomethyldihydrolipoyl]-L-lysyl-[glycine-cleavage complex H protein] + CO2. Its function is as follows. The glycine cleavage system catalyzes the degradation of glycine. The P protein binds the alpha-amino group of glycine through its pyridoxal phosphate cofactor; CO(2) is released and the remaining methylamine moiety is then transferred to the lipoamide cofactor of the H protein. In Geobacillus sp. (strain WCH70), this protein is Probable glycine dehydrogenase (decarboxylating) subunit 1.